Here is a 707-residue protein sequence, read N- to C-terminus: Nucleolin 2 (707 aa).

The segment at 1-446 is disordered; sequence MGKSSKKSAV…TPASNQNQAT (446 aa). Composition is skewed to basic and acidic residues over residues 30–40 and 47–60; these read RNAEDEIEKAV and TVRE…EEAK. Acidic residues-rich tracts occupy residues 75 to 85, 108 to 120, and 144 to 153; these read SSEEDSSESEE, SSDD…SSDD, and DSSDESLSDD. Positions 158-170 are enriched in low complexity; that stretch reads KPAAPLKKPVALA. Composition is skewed to acidic residues over residues 219–232, 248–263, and 271–287; these read DSSD…SDED, SESS…DDEA, and ESSD…SDSD. Residues 300–311 show a composition bias toward basic and acidic residues; it reads LTKDTKKGQSKD. Residues 312–326 are compositionally biased toward acidic residues; sequence ESEDSSDESSEESGD. The span at 336–347 shows a compositional bias: low complexity; sequence STTSGTTKPSPK. Residues 355–370 are compositionally biased toward acidic residues; it reads SDDESDEDDSSDESSD. Residues 376–394 are compositionally biased toward low complexity; the sequence is KQTQAKKQAPVAQESSSSD. Residues 395 to 406 are compositionally biased toward acidic residues; it reads ESSEEDSDMESD. Residues 407 to 417 show a composition bias toward basic and acidic residues; sequence EPAKTPQKKET. Polar residues predominate over residues 420–429; that stretch reads SVGSNKSATK. Positions 449–525 constitute an RRM 1 domain; sequence KTLFVGNLPY…RPVRLDLARE (77 aa). 2 disordered regions span residues 527 to 546 and 629 to 707; these read GAYT…PAQS and RPRP…GDDD. The RRM 2 domain maps to 549 to 630; the sequence is NTIFIKGFDT…YSLYVDEARP (82 aa). Positions 657 to 681 are enriched in basic and acidic residues; that stretch reads GRGDGSRGRGDRGRGRGFGRGDRGH.

The protein localises to the nucleus. Its subcellular location is the nucleolus. In terms of biological role, involved in pre-rRNA processing and ribosome assembly. The sequence is that of Nucleolin 2 from Oryza sativa subsp. japonica (Rice).